Consider the following 299-residue polypeptide: Diaminopimelate epimerase (299 aa).

Positions 13, 46, and 66 each coordinate substrate. Catalysis depends on C75, which acts as the Proton donor. Substrate contacts are provided by residues 76–77, N166, N199, and 217–218; these read GN and ER. Catalysis depends on C226, which acts as the Proton acceptor. 227-228 lines the substrate pocket; sequence GT.

It belongs to the diaminopimelate epimerase family. Homodimer.

It is found in the cytoplasm. The enzyme catalyses (2S,6S)-2,6-diaminopimelate = meso-2,6-diaminopimelate. It participates in amino-acid biosynthesis; L-lysine biosynthesis via DAP pathway; DL-2,6-diaminopimelate from LL-2,6-diaminopimelate: step 1/1. Its function is as follows. Catalyzes the stereoinversion of LL-2,6-diaminopimelate (L,L-DAP) to meso-diaminopimelate (meso-DAP), a precursor of L-lysine and an essential component of the bacterial peptidoglycan. This Paraburkholderia phytofirmans (strain DSM 17436 / LMG 22146 / PsJN) (Burkholderia phytofirmans) protein is Diaminopimelate epimerase.